We begin with the raw amino-acid sequence, 72 residues long: Large ribosomal subunit protein uL29 (72 aa).

This sequence belongs to the universal ribosomal protein uL29 family.

In Treponema pallidum (strain Nichols), this protein is Large ribosomal subunit protein uL29 (rpmC).